Consider the following 355-residue polypeptide: Erythronate-4-phosphate dehydrogenase (355 aa).

Substrate-binding residues include S45 and T66. D146 serves as a coordination point for NAD(+). R206 is a catalytic residue. D229 is an NAD(+) binding site. Residue E234 is part of the active site. H251 serves as the catalytic Proton donor. G254 serves as a coordination point for NAD(+). Position 255 (Y255) interacts with substrate.

It belongs to the D-isomer specific 2-hydroxyacid dehydrogenase family. PdxB subfamily. As to quaternary structure, homodimer.

It localises to the cytoplasm. It catalyses the reaction 4-phospho-D-erythronate + NAD(+) = (R)-3-hydroxy-2-oxo-4-phosphooxybutanoate + NADH + H(+). It functions in the pathway cofactor biosynthesis; pyridoxine 5'-phosphate biosynthesis; pyridoxine 5'-phosphate from D-erythrose 4-phosphate: step 2/5. Its function is as follows. Catalyzes the oxidation of erythronate-4-phosphate to 3-hydroxy-2-oxo-4-phosphonooxybutanoate. This is Erythronate-4-phosphate dehydrogenase from Acinetobacter baumannii (strain SDF).